The chain runs to 370 residues: uncharacterized protein (370 aa).

Residue Met1 is modified to N-acetylmethionine.

Belongs to the ornithine cyclodeaminase/mu-crystallin family.

This is an uncharacterized protein from Saccharomyces cerevisiae (strain ATCC 204508 / S288c) (Baker's yeast).